The sequence spans 507 residues: MPENRSYNDELNFLDKIDANTWRIKKGFVPNMKVDGFFYVNDLLEKLMFDELRQHSRAAGFGGFLPAMKQIANVAALPGIVQKSVGLPDVHAGYGFAIGNLAAFDMSNPEAVVSPGGVGFDINCGVRLLRTNLDERDVQPVKDELAQAMFDHIPVGVGSKGVIPMGARDLEEALEMGVDWSLREGYAWAEDKEHCEEYGRMLNADQSAVGSKAKKRGLPQLGTLGAGNHYAEIQVVDEIFDDYASQRMGIDHKGQVVVMIHSGSRGFGHQVATDALVAMEKAMKRDKVLTNDRQLACARIHSPEGQEYLKGMACAANFAWVNRSSMTFLSRQAFAKVFNTTPDDLDMQLIYDVSHNIAKMEEHISFQLSTTLLVHRKGSTRAFPPHHPLIPVDYQLSGQPVLIGGTMGTCSYVLTGTEKGMEQTFGTTCHGAGRAWSRAKSRRNLDYQEVLDRLAELGISIRVASPKLVMEEAPESYKNVTDVVNTCHAVGISKKAIKLRPIAVIKG.

Mn(2+) contacts are provided by Asp121, Cys124, His229, His261, and His355. Position 228–232 (228–232) interacts with GMP; the sequence is NHYAE. Residues 355–356, 404–407, Ser411, 430–433, and Lys506 each bind GMP; these read HN, GGTM, and HGAG. His430 functions as the GMP-histidine intermediate in the catalytic mechanism.

The protein belongs to the RtcB family. Catalytic component of the tRNA-splicing ligase complex. Requires Mn(2+) as cofactor.

It carries out the reaction a 3'-end 3'-phospho-ribonucleotide-RNA + a 5'-end dephospho-ribonucleoside-RNA + GTP = a ribonucleotidyl-ribonucleotide-RNA + GMP + diphosphate. The catalysed reaction is a 3'-end 2',3'-cyclophospho-ribonucleotide-RNA + a 5'-end dephospho-ribonucleoside-RNA + GTP + H2O = a ribonucleotidyl-ribonucleotide-RNA + GMP + diphosphate + H(+). In terms of biological role, catalytic subunit of the tRNA-splicing ligase complex that acts by directly joining spliced tRNA halves to mature-sized tRNAs by incorporating the precursor-derived splice junction phosphate into the mature tRNA as a canonical 3',5'-phosphodiester. May act as an RNA ligase with broad substrate specificity, and may function toward other RNAs. The protein is RNA-splicing ligase RtcB homolog of Branchiostoma floridae (Florida lancelet).